A 234-amino-acid polypeptide reads, in one-letter code: Synaptogyrin-4 (234 aa).

Residues 18 to 169 enclose the MARVEL domain; the sequence is FLRRPKTITR…QAYLAFQDLR (152 aa). 4 consecutive transmembrane segments (helical) span residues 25–45, 66–86, 104–124, and 145–165; these read ITRV…LTDG, CSFA…FLVL, LLDF…FCFL, and AAIA…YLAF.

The protein belongs to the synaptogyrin family.

It localises to the membrane. This Homo sapiens (Human) protein is Synaptogyrin-4 (SYNGR4).